The chain runs to 349 residues: N-acetyltaurine hydrolase (349 aa).

A divalent metal cation is bound by residues His26, His28, Glu169, His201, His230, and Asp298.

The protein belongs to the metallo-dependent hydrolases superfamily. Phosphotriesterase family. A divalent metal cation is required as a cofactor.

Its subcellular location is the cytoplasm. The protein localises to the cytosol. It carries out the reaction N-acetyltaurine + H2O = taurine + acetate. The catalysed reaction is N-propanoyltaurine + H2O = propanoate + taurine. The enzyme catalyses N-acetyl-L-methionine + H2O = L-methionine + acetate. It catalyses the reaction N-acetyl-L-isoleucine + H2O = L-isoleucine + acetate. It carries out the reaction N-acetyl-L-leucine + H2O = L-leucine + acetate. The catalysed reaction is N-acetyl-L-valine + H2O = L-valine + acetate. Its function is as follows. N-acetyltaurine hydrolase that regulates feeding by catalyzing the hydrolysis of N-acetyltaurine into taurine and acetate. N-acetyltaurine has anorexigenic and anti-obesity effects that are dependent on GFRAL receptor and GDF15. PTER also acts on other N-acetyl amino acids (Met, Ile, Leu, Val) and N-propionyltaurine, but at lower rates. The protein is N-acetyltaurine hydrolase (PTER) of Bos taurus (Bovine).